A 271-amino-acid polypeptide reads, in one-letter code: MASHDKRDYQAELTDAALAADLATAAGELLLEIREEIGFDQPRALGDAGDRLANSLLLSRLRAERPGDAVLSEEAHDDRVRLQAGRVWIIDPLDGTREFSTAGRTDWAVHIALWQRTTGGVADGRREITDAAVALPARGNRVYRSDTVTAGAVTGGVPNILRIAVSATRPPTILHRIRQKLAIEPVAIGSAGAKAMAVVDGDVDAYLHVGGQWEWDSAAPAGVVLAAGMHASRLDGSPLRYNQLDPYLPDFVMCRADIAPILLGVIREVWQ.

5 residues coordinate Mg(2+): Glu-73, Asp-91, Leu-93, Asp-94, and Asp-216. Glu-73 contacts substrate. Substrate contacts are provided by residues 93–96 and Asp-216; that span reads LDGT.

This sequence belongs to the inositol monophosphatase superfamily. Homodimer. The cofactor is Mg(2+).

The enzyme catalyses adenosine 3',5'-bisphosphate + H2O = AMP + phosphate. The catalysed reaction is beta-D-fructose 1,6-bisphosphate + H2O = beta-D-fructose 6-phosphate + phosphate. It carries out the reaction a myo-inositol phosphate + H2O = myo-inositol + phosphate. The protein operates within sulfur metabolism; sulfate assimilation. In terms of biological role, phosphatase with a broad specificity. Its primary physiological function is to dephosphorylate 3'-phosphoadenosine 5'-phosphate (PAP) and 3'-phosphoadenosine 5'-phosphosulfate (PAPS). Thus, plays a role in mycobacterial sulfur metabolism, since it can serve as a key regulator of the sulfate assimilation pathway by controlling the pools of PAP and PAPS in the cell. To a lesser extent, is also able to hydrolyze inositol 1-phosphate (I-1-P), fructose 1,6-bisphosphate (FBP) (to fructose 6-phosphate (F-6-P)) and AMP in vitro, but this might not be significant in vivo. The chain is 3'-phosphoadenosine 5'-phosphate phosphatase (cysQ) from Mycobacterium leprae (strain TN).